The primary structure comprises 81 residues: UPF0248 protein SSO2687 (81 aa).

Belongs to the UPF0248 family.

This Saccharolobus solfataricus (strain ATCC 35092 / DSM 1617 / JCM 11322 / P2) (Sulfolobus solfataricus) protein is UPF0248 protein SSO2687.